Consider the following 1395-residue polypeptide: DNA polymerase II large subunit (1395 aa).

Disordered regions lie at residues 279-320 (IGKD…PRVE) and 657-704 (GNRM…MSDT). Positions 283–312 (EADEGDSAEDANGDDAGEGADDDGGDEADE) are enriched in acidic residues. 2 stretches are compositionally biased toward basic and acidic residues: residues 661 to 671 (GRPEKSERRDL) and 690 to 700 (DVAKATKHADD).

The protein belongs to the archaeal DNA polymerase II family. Heterodimer of a large subunit and a small subunit. This protein undergoes a protein self splicing that involves a post-translational excision of the intervening region (intein) followed by peptide ligation.

The catalysed reaction is DNA(n) + a 2'-deoxyribonucleoside 5'-triphosphate = DNA(n+1) + diphosphate. The enzyme catalyses Exonucleolytic cleavage in the 3'- to 5'-direction to yield nucleoside 5'-phosphates.. Possesses two activities: a DNA synthesis (polymerase) and an exonucleolytic activity that degrades single-stranded DNA in the 3'- to 5'-direction. Has a template-primer preference which is characteristic of a replicative DNA polymerase. In Haloarcula marismortui (strain ATCC 43049 / DSM 3752 / JCM 8966 / VKM B-1809) (Halobacterium marismortui), this protein is DNA polymerase II large subunit.